The primary structure comprises 545 residues: CTP synthase (545 aa).

An amidoligase domain region spans residues 1 to 266; the sequence is MTKNYIFITG…DDYICNYFKL (266 aa). Residue Ser-14 participates in CTP binding. Residue Ser-14 coordinates UTP. Residues 15-20 and Asp-72 contribute to the ATP site; that span reads SLGKGI. Mg(2+)-binding residues include Asp-72 and Glu-140. CTP contacts are provided by residues 147 to 149, 187 to 192, and Lys-223; these read DIE and KTKPTQ. Residues 187 to 192 and Lys-223 contribute to the UTP site; that span reads KTKPTQ. 239–241 provides a ligand contact to ATP; sequence KDV. The 253-residue stretch at 291–543 folds into the Glutamine amidotransferase type-1 domain; sequence VIGIIGKYIK…IKSAGKHKKN (253 aa). Residue Gly-352 coordinates L-glutamine. The active-site Nucleophile; for glutamine hydrolysis is Cys-379. Residues 380–383, Glu-403, and Arg-471 each bind L-glutamine; that span reads LGMQ. Residues His-516 and Glu-518 contribute to the active site.

The protein belongs to the CTP synthase family. In terms of assembly, homotetramer.

The enzyme catalyses UTP + L-glutamine + ATP + H2O = CTP + L-glutamate + ADP + phosphate + 2 H(+). It catalyses the reaction L-glutamine + H2O = L-glutamate + NH4(+). It carries out the reaction UTP + NH4(+) + ATP = CTP + ADP + phosphate + 2 H(+). It functions in the pathway pyrimidine metabolism; CTP biosynthesis via de novo pathway; CTP from UDP: step 2/2. Allosterically activated by GTP, when glutamine is the substrate; GTP has no effect on the reaction when ammonia is the substrate. The allosteric effector GTP functions by stabilizing the protein conformation that binds the tetrahedral intermediate(s) formed during glutamine hydrolysis. Inhibited by the product CTP, via allosteric rather than competitive inhibition. In terms of biological role, catalyzes the ATP-dependent amination of UTP to CTP with either L-glutamine or ammonia as the source of nitrogen. Regulates intracellular CTP levels through interactions with the four ribonucleotide triphosphates. In Buchnera aphidicola subsp. Acyrthosiphon pisum (strain 5A), this protein is CTP synthase.